The following is a 215-amino-acid chain: Vesicle-trafficking protein SEC22b (215 aa).

Residues 2-194 (VLLTMIARVA…KYLNMRSTYA (193 aa)) are Cytoplasmic-facing. A Longin domain is found at 6–119 (MIARVADGLP…YSFIEFDTFI (114 aa)). The residue at position 38 (lysine 38) is an N6-acetyllysine. Positions 134-194 (NLGSINTELQ…KYLNMRSTYA (61 aa)) constitute a v-SNARE coiled-coil homology domain. Serine 137 carries the post-translational modification Phosphoserine. At threonine 140 the chain carries Phosphothreonine. Residues serine 164, serine 168, serine 174, and serine 177 each carry the phosphoserine modification. Residues 195-215 (KLAAVAVFFIMLIVYVRFWWL) form a helical; Anchor for type IV membrane protein membrane-spanning segment.

Belongs to the synaptobrevin family. Interacts with STX17. Component of two distinct SNARE complexes consisting of STX5, GOSR2/BOS1, BET1 and SEC22B or STX18, USE1L, BNIP1/SEC20L and SEC22B. YKT6 can probably replace SEC22B in either complex. Interacts with the COPII Sec23/24 complex composed of SEC23A and SEC24A; recruits SEC22B into COPII-coated vesicles to allow its transport from the endoplasmic reticulum to the Golgi. Interacts with BET1.

It is found in the endoplasmic reticulum membrane. It localises to the endoplasmic reticulum-Golgi intermediate compartment membrane. The protein localises to the golgi apparatus. Its subcellular location is the cis-Golgi network membrane. The protein resides in the trans-Golgi network membrane. It is found in the melanosome. Its function is as follows. SNARE involved in targeting and fusion of ER-derived transport vesicles with the Golgi complex as well as Golgi-derived retrograde transport vesicles with the ER. In Homo sapiens (Human), this protein is Vesicle-trafficking protein SEC22b (SEC22B).